Here is a 245-residue protein sequence, read N- to C-terminus: E3 ubiquitin-protein ligase RNF138 (245 aa).

The RING-type zinc finger occupies Cys18–Arg58. Zn(2+) contacts are provided by Cys86, Cys89, His101, and Cys105. A C2HC RNF-type zinc finger spans residues Cys86 to Cys105. The interval Val128–His154 is disordered. Thr142 is subject to Phosphothreonine. C2H2-type zinc fingers lie at residues Phe157–His180 and Val187–His215. Residues Leu225 to Val243 form the UIM domain.

In terms of assembly, interacts with NLK. Interacts with XRCC5/Ku80. Interacts with RBBP8/CtIP. In terms of processing, auto-ubiquitinated.

The protein localises to the chromosome. It carries out the reaction S-ubiquitinyl-[E2 ubiquitin-conjugating enzyme]-L-cysteine + [acceptor protein]-L-lysine = [E2 ubiquitin-conjugating enzyme]-L-cysteine + N(6)-ubiquitinyl-[acceptor protein]-L-lysine.. It functions in the pathway protein modification; protein ubiquitination. In terms of biological role, E3 ubiquitin-protein ligase involved in DNA damage response by promoting DNA resection and homologous recombination. Recruited to sites of double-strand breaks following DNA damage and specifically promotes double-strand break repair via homologous recombination. Two different, non-exclusive, mechanisms have been proposed. According to a report, regulates the choice of double-strand break repair by favoring homologous recombination over non-homologous end joining (NHEJ): acts by mediating ubiquitination of XRCC5/Ku80, leading to remove the Ku complex from DNA breaks, thereby promoting homologous recombination. According to another report, cooperates with UBE2Ds E2 ubiquitin ligases (UBE2D1, UBE2D2, UBE2D3 or UBE2D4) to promote homologous recombination by mediating ubiquitination of RBBP8/CtIP. Together with NLK, involved in the ubiquitination and degradation of TCF/LEF. Also exhibits auto-ubiquitination activity in combination with UBE2K. May act as a negative regulator in the Wnt/beta-catenin-mediated signaling pathway. The polypeptide is E3 ubiquitin-protein ligase RNF138 (Mus musculus (Mouse)).